The chain runs to 24 residues: GLVSSIGRALGGLLADVVKSKQPA.

The protein belongs to the frog skin active peptide (FSAP) family. Caerin subfamily. Expressed by the skin dorsal glands.

It localises to the secreted. In terms of biological role, inhibits the formation of NO by neuronal nitric oxide synthase. This Litoria rothii (Roth's tree frog) protein is Caerin-2.1.